A 446-amino-acid chain; its full sequence is Exodeoxyribonuclease 7 large subunit (446 aa).

Belongs to the XseA family. As to quaternary structure, heterooligomer composed of large and small subunits.

It localises to the cytoplasm. The catalysed reaction is Exonucleolytic cleavage in either 5'- to 3'- or 3'- to 5'-direction to yield nucleoside 5'-phosphates.. Bidirectionally degrades single-stranded DNA into large acid-insoluble oligonucleotides, which are then degraded further into small acid-soluble oligonucleotides. This chain is Exodeoxyribonuclease 7 large subunit, found in Streptococcus agalactiae serotype Ia (strain ATCC 27591 / A909 / CDC SS700).